The primary structure comprises 412 residues: MTNYRVESSSGRAARKMRLALMGPAFIAAIGYIDPGNFATNIQAGASFGYQLLWVVVWANLMAMLIQILSAKLGIATGKNLAEQIRDHYPRPVVWFYWVQAEIIAMATDLAEFIGAAIGFKLILGVSLLQGAVLTGIATFLILMLQRRGQKPLEKVIGGLLLFVAAAYIVELIFSQPNLAQLGKGMVIPSLPTSEAVFLAAGVLGATIMPHVIYLHSSLTQHLHGGSRQQRYSATKWDVAIAMTIAGFVNLVMMATAAAAFHFSGHTGVADLDEAYLTLQPLLSHAAATVFGLSLVAAGLSSTVVGTLAGQVVMQGFIRFHIPLWVRRTVTMLPSFIVILMGLDPTRILVMSQVLLSFGIALALVPLLIFTSDSKLMGDLVNSKRVKQTGWVIVVLVVALNIWLLVGTALGL.

The Cytoplasmic segment spans residues 1 to 19 (MTNYRVESSSGRAARKMRL). The chain crosses the membrane as a helical span at residues 20–39 (ALMGPAFIAAIGYIDPGNFA). Residues 40–51 (TNIQAGASFGYQ) are Periplasmic-facing. The chain crosses the membrane as a helical span at residues 52–71 (LLWVVVWANLMAMLIQILSA). At 72 to 95 (KLGIATGKNLAEQIRDHYPRPVVW) the chain is on the cytoplasmic side. Residues 96 to 118 (FYWVQAEIIAMATDLAEFIGAAI) form a helical membrane-spanning segment. Residues 119-125 (GFKLILG) lie on the Periplasmic side of the membrane. A helical membrane pass occupies residues 126–145 (VSLLQGAVLTGIATFLILML). Over 146-155 (QRRGQKPLEK) the chain is Cytoplasmic. A helical membrane pass occupies residues 156 to 175 (VIGGLLLFVAAAYIVELIFS). At 176–196 (QPNLAQLGKGMVIPSLPTSEA) the chain is on the periplasmic side. The helical transmembrane segment at 197–220 (VFLAAGVLGATIMPHVIYLHSSLT) threads the bilayer. Residues 221–238 (QHLHGGSRQQRYSATKWD) are Cytoplasmic-facing. The helical transmembrane segment at 239–258 (VAIAMTIAGFVNLVMMATAA) threads the bilayer. Residues 259–276 (AAFHFSGHTGVADLDEAY) lie on the Periplasmic side of the membrane. The helical transmembrane segment at 277–297 (LTLQPLLSHAAATVFGLSLVA) threads the bilayer. Residues 298-327 (AGLSSTVVGTLAGQVVMQGFIRFHIPLWVR) are Cytoplasmic-facing. The chain crosses the membrane as a helical span at residues 328 to 344 (RTVTMLPSFIVILMGLD). The Periplasmic portion of the chain corresponds to 345-350 (PTRILV). A helical membrane pass occupies residues 351-370 (MSQVLLSFGIALALVPLLIF). Over 371–387 (TSDSKLMGDLVNSKRVK) the chain is Cytoplasmic. A helical membrane pass occupies residues 388 to 406 (QTGWVIVVLVVALNIWLLV). The Periplasmic segment spans residues 407–412 (GTALGL).

The protein belongs to the NRAMP family.

The protein localises to the cell inner membrane. Functionally, h(+)-stimulated, divalent metal cation uptake system. This is Divalent metal cation transporter MntH from Shigella flexneri serotype 5b (strain 8401).